Reading from the N-terminus, the 392-residue chain is Succinyl-diaminopimelate desuccinylase (392 aa).

His71 contributes to the Zn(2+) binding site. Residue Asp73 is part of the active site. Asp102 contacts Zn(2+). Glu144 serves as the catalytic Proton acceptor. Residues Glu145, Glu173, and His362 each coordinate Zn(2+).

It belongs to the peptidase M20A family. DapE subfamily. As to quaternary structure, homodimer. The cofactor is Zn(2+). It depends on Co(2+) as a cofactor.

It catalyses the reaction N-succinyl-(2S,6S)-2,6-diaminopimelate + H2O = (2S,6S)-2,6-diaminopimelate + succinate. The protein operates within amino-acid biosynthesis; L-lysine biosynthesis via DAP pathway; LL-2,6-diaminopimelate from (S)-tetrahydrodipicolinate (succinylase route): step 3/3. Its function is as follows. Catalyzes the hydrolysis of N-succinyl-L,L-diaminopimelic acid (SDAP), forming succinate and LL-2,6-diaminopimelate (DAP), an intermediate involved in the bacterial biosynthesis of lysine and meso-diaminopimelic acid, an essential component of bacterial cell walls. This is Succinyl-diaminopimelate desuccinylase from Rhodospirillum rubrum (strain ATCC 11170 / ATH 1.1.1 / DSM 467 / LMG 4362 / NCIMB 8255 / S1).